The chain runs to 118 residues: Large ribosomal subunit protein bL20 (118 aa).

This sequence belongs to the bacterial ribosomal protein bL20 family.

Its function is as follows. Binds directly to 23S ribosomal RNA and is necessary for the in vitro assembly process of the 50S ribosomal subunit. It is not involved in the protein synthesizing functions of that subunit. This is Large ribosomal subunit protein bL20 from Caulobacter vibrioides (strain ATCC 19089 / CIP 103742 / CB 15) (Caulobacter crescentus).